A 723-amino-acid polypeptide reads, in one-letter code: Fatty acid oxidation complex subunit alpha (723 aa).

Residues 1–189 are enoyl-CoA hydratase/isomerase; sequence MIYQAETLQV…KIGLLDAVVD (189 aa). Substrate is bound at residue aspartate 296. The interval 311 to 723 is 3-hydroxyacyl-CoA dehydrogenase; that stretch reads NKETQRAAVL…FYGAQQQGSI (413 aa). Residues methionine 325, aspartate 344, 401 to 403, lysine 408, and serine 430 contribute to the NAD(+) site; that span reads VVE. Catalysis depends on histidine 451, which acts as the For 3-hydroxyacyl-CoA dehydrogenase activity. Asparagine 454 contributes to the NAD(+) binding site. The substrate site is built by asparagine 501 and tyrosine 661.

The protein in the N-terminal section; belongs to the enoyl-CoA hydratase/isomerase family. It in the C-terminal section; belongs to the 3-hydroxyacyl-CoA dehydrogenase family. Heterotetramer of two alpha chains (FadB) and two beta chains (FadA).

It carries out the reaction a (3S)-3-hydroxyacyl-CoA + NAD(+) = a 3-oxoacyl-CoA + NADH + H(+). The catalysed reaction is a (3S)-3-hydroxyacyl-CoA = a (2E)-enoyl-CoA + H2O. It catalyses the reaction a 4-saturated-(3S)-3-hydroxyacyl-CoA = a (3E)-enoyl-CoA + H2O. The enzyme catalyses (3S)-3-hydroxybutanoyl-CoA = (3R)-3-hydroxybutanoyl-CoA. It carries out the reaction a (3Z)-enoyl-CoA = a 4-saturated (2E)-enoyl-CoA. The catalysed reaction is a (3E)-enoyl-CoA = a 4-saturated (2E)-enoyl-CoA. It functions in the pathway lipid metabolism; fatty acid beta-oxidation. Involved in the aerobic and anaerobic degradation of long-chain fatty acids via beta-oxidation cycle. Catalyzes the formation of 3-oxoacyl-CoA from enoyl-CoA via L-3-hydroxyacyl-CoA. It can also use D-3-hydroxyacyl-CoA and cis-3-enoyl-CoA as substrate. This Vibrio vulnificus (strain CMCP6) protein is Fatty acid oxidation complex subunit alpha.